Reading from the N-terminus, the 509-residue chain is T-complex protein 11-like protein 1 (509 aa).

Basic and acidic residues predominate over residues 1 to 12; sequence MSENLDKSHVDE. The interval 1–57 is disordered; that stretch reads MSENLDKSHVDEAGEAEAAASEQGLEGALECSDETLQKKVKSDSPSSQRVGRPHSSP. Residues 16–30 are compositionally biased toward low complexity; sequence AEAAASEQGLEGALE. Ser-56 is modified (phosphoserine).

This sequence belongs to the TCP11 family.

The chain is T-complex protein 11-like protein 1 (Tcp11l1) from Mus musculus (Mouse).